The chain runs to 366 residues: Histone-lysine N-methyltransferase SETD7 (366 aa).

MORN repeat units follow at residues 36–58 (FEGN…DGST), 59–81 (LEGY…DGGV), and 106–128 (FKGQ…DGGS). The SET domain maps to 214 to 336 (ERVYVAESLI…ADEELTVAYG (123 aa)). S-adenosyl-L-methionine-binding positions include 226–228 (AGE), Asn296, His297, and Glu356.

This sequence belongs to the class V-like SAM-binding methyltransferase superfamily. Histone-lysine methyltransferase family. SET7 subfamily. As to quaternary structure, interacts with IPF1/PDX-1. As to expression, widely expressed. Expressed in pancreatic islets.

It localises to the nucleus. The protein resides in the chromosome. The enzyme catalyses L-lysyl(4)-[histone H3] + S-adenosyl-L-methionine = N(6)-methyl-L-lysyl(4)-[histone H3] + S-adenosyl-L-homocysteine + H(+). It carries out the reaction L-lysyl-[protein] + S-adenosyl-L-methionine = N(6)-methyl-L-lysyl-[protein] + S-adenosyl-L-homocysteine + H(+). Functionally, histone methyltransferase that specifically monomethylates 'Lys-4' of histone H3. H3 'Lys-4' methylation represents a specific tag for epigenetic transcriptional activation. Plays a central role in the transcriptional activation of genes such as collagenase or insulin. Recruited by IPF1/PDX-1 to the insulin promoter, leading to activate transcription. Also has methyltransferase activity toward non-histone proteins such as CGAS, p53/TP53, TAF10, and possibly TAF7 by recognizing and binding the [KR]-[STA]-K in substrate proteins. Monomethylates 'Lys-189' of TAF10, leading to increase the affinity of TAF10 for RNA polymerase II. Monomethylates 'Lys-372' of p53/TP53, stabilizing p53/TP53 and increasing p53/TP53-mediated transcriptional activation. Monomethylates 'Lys-491' of CGAS, promoting interaction between SGF29 and CGAS. The protein is Histone-lysine N-methyltransferase SETD7 (SETD7) of Homo sapiens (Human).